The sequence spans 429 residues: Chordin-like protein 2 (429 aa).

The first 25 residues, 1 to 25 (MVPEVRVLSSLLGLALLWFPLDSHA), serve as a signal peptide directing secretion. VWFC domains follow at residues 31–96 (MFCL…PKCV) and 109–175 (KSCQ…QACK). N114 is a glycosylation site (N-linked (GlcNAc...) asparagine). At S182 the chain carries Phosphoserine; by FAM20C. The disordered stretch occupies residues 182–224 (SDEEDSVQSLHGVRHPQDPCSSDAGRKRGPGTPAPTGLSAPLS). Residues 250 to 315 (KACVHGGKTY…VAGKCCKICP (66 aa)) form the VWFC 3 domain.

As to quaternary structure, interacts with GDF5. May interact with BMP2, BMP4, BMP5, BMP6, BMP7 and INHBA. In terms of processing, phosphorylated by FAM20C in the extracellular medium. As to expression, highly expressed in uterus. Moderately expressed in heart, liver, prostate, testis and ovary. Weakly expressed in skeletal muscle, kidney, spleen, small intestine and colon. Expressed in the secretory epithelial cells of uterine endometrium, fallopian tubes, endocervical glands, bladder and prostate, as well as the transitional epithelium of the urinary bladder, and in bone osteoblasts (at protein level). In normal cartilage, expression was confined in a few chondrocytes in the superficial zone as well as in the middle zone. In diseased cartilage coming from osteoarthritic patients, expression was limited to the middle zone of chondrocytes. Isoform 1 and isoform 2 are expressed in fetal cerebellum and heart, while only isoform 2 is detected in fetal spleen. Isoform 2 present in plasma.

The protein localises to the secreted. Its subcellular location is the cytoplasm. Functionally, may inhibit BMPs activity by blocking their interaction with their receptors. Has a negative regulator effect on the cartilage formation/regeneration from immature mesenchymal cells, by preventing or reducing the rate of matrix accumulation. Implicated in tumor angiogenesis. May play a role during myoblast and osteoblast differentiation, and maturation. The chain is Chordin-like protein 2 (CHRDL2) from Homo sapiens (Human).